Reading from the N-terminus, the 443-residue chain is Crinkler effector protein 161 (443 aa).

Residues 1 to 17 (MVKLSCVIVGVPGDPFQ) form the signal peptide. Positions 18–56 (VEIDEICELVAGLKDAIKKEKPDSIKCDADKLQLFKAAK) are LQLFLAK domain. The tract at residues 57–126 (EDRTFSASGA…GMESPSISQI (70 aa)) is DWL domain. An HVLVXXP motif motif is present at residues 127-133 (HVLVVLP). Residues 134–439 (EDSESEGGTS…RSMPGYCCAN (306 aa)) form an effector domain region. Short sequence motifs (nuclear localization signal) lie at residues 161-170 (ADKKRKRYWH) and 384-393 (HQPLKRLKLS).

Belongs to the Crinkler effector family.

The protein localises to the secreted. The protein resides in the host nucleus. In terms of biological role, secreted effector that exhibits strong cell death suppression activity and suppresses cell death induced by a variety of effectors including CRN63, Avh241 and Avr3a. Protects host plants from biotic and abiotic stresses such as salinity and drought by up-regulation of many defense-related genes, including ABC transporters, Cytochrome P450 monooxygenases and receptor-like kinases (RLKs). Also enhances resistance to Phytophtora pathogens. This chain is Crinkler effector protein 161, found in Phytophthora sojae (strain P6497) (Soybean stem and root rot agent).